We begin with the raw amino-acid sequence, 126 residues long: Small ribosomal subunit protein uS13 (126 aa).

Positions 95-126 (GMPVRGQRTRTNARTRRGRRGQAIGIKKKVKK) are disordered.

Belongs to the universal ribosomal protein uS13 family. Part of the 30S ribosomal subunit. Forms a loose heterodimer with protein S19. Forms two bridges to the 50S subunit in the 70S ribosome.

In terms of biological role, located at the top of the head of the 30S subunit, it contacts several helices of the 16S rRNA. In the 70S ribosome it contacts the 23S rRNA (bridge B1a) and protein L5 of the 50S subunit (bridge B1b), connecting the 2 subunits; these bridges are implicated in subunit movement. Contacts the tRNAs in the A and P-sites. The protein is Small ribosomal subunit protein uS13 of Chloroflexus aggregans (strain MD-66 / DSM 9485).